A 120-amino-acid chain; its full sequence is Large ribosomal subunit protein uL18 (120 aa).

It belongs to the universal ribosomal protein uL18 family. As to quaternary structure, part of the 50S ribosomal subunit; part of the 5S rRNA/L5/L18/L25 subcomplex. Contacts the 5S and 23S rRNAs.

In terms of biological role, this is one of the proteins that bind and probably mediate the attachment of the 5S RNA into the large ribosomal subunit, where it forms part of the central protuberance. In Methylobacterium nodulans (strain LMG 21967 / CNCM I-2342 / ORS 2060), this protein is Large ribosomal subunit protein uL18.